We begin with the raw amino-acid sequence, 156 residues long: V-type proton ATPase 16 kDa proteolipid subunit c (156 aa).

Over 1–7 (MAENPIY) the chain is Lumenal. The chain crosses the membrane as a helical span at residues 8–30 (GPFFGVMGAASAIIFSALGAAYG). Over 31–52 (TAKSGTGIAAMSVMRPELIMKS) the chain is Cytoplasmic. Residues 53 to 73 (IIPVVMAGIIAIYGLVVAVLI) traverse the membrane as a helical segment. The Lumenal segment spans residues 74–92 (AGSLDAPSNNYTLYKGFIH). A helical membrane pass occupies residues 93 to 114 (LGAGLAVGFSGLAAGFAIGIVG). At 115–126 (DAGVRGTAQQPR) the chain is on the cytoplasmic side. The helical transmembrane segment at 127 to 152 (LFVGMILILIFAEVLGLYGLIVAIYL) threads the bilayer. The Lumenal segment spans residues 153–156 (YTKQ).

Belongs to the V-ATPase proteolipid subunit family. V-ATPase is a heteromultimeric enzyme made up of two complexes: the ATP-hydrolytic V1 complex and the proton translocation V0 complex. The V1 complex consists of three catalytic AB heterodimers that form a heterohexamer, three peripheral stalks each consisting of EG heterodimers, one central rotor including subunits D and F, and the regulatory subunits C and H. The proton translocation complex V0 consists of the proton transport subunit a, a ring of proteolipid subunits c9c'', rotary subunit d, subunits e and f, and the accessory subunits VhaAC45 and ATP6AP2.

The protein resides in the membrane. In terms of biological role, proton-conducting pore forming subunit of the V0 complex of vacuolar(H+)-ATPase (V-ATPase), a multisubunit enzyme composed of a peripheral complex (V1) that hydrolyzes ATP and a membrane integral complex (V0) that translocates protons. V-ATPase is responsible for acidifying and maintaining the pH of intracellular compartments and in some cell types, is targeted to the plasma membrane, where it is responsible for acidifying the extracellular environment. The sequence is that of V-type proton ATPase 16 kDa proteolipid subunit c (VHA16) from Heliothis virescens (Tobacco budworm moth).